The following is a 190-amino-acid chain: Apolipoprotein M (190 aa).

The signal sequence occupies residues 1–17 (MFHQVWAALLYLYGLLF). 3 disulfides stabilise this stretch: C23/C169, C95/C185, and C130/C159. 2 residues coordinate tetradecanoate: E138 and R145.

This sequence belongs to the calycin superfamily. Lipocalin family. Highly divergent. In terms of assembly, interacts with LRP2; LRP2 mediates APOM renal uptake and subsequent lysosomal degradation. In terms of tissue distribution, expressed by the liver; secreted in plasma.

Its subcellular location is the secreted. Probably involved in lipid transport. Can bind sphingosine-1-phosphate, myristic acid, palmitic acid and stearic acid, retinol, all-trans-retinoic acid and 9-cis-retinoic acid. This chain is Apolipoprotein M (Apom), found in Rattus norvegicus (Rat).